The following is a 321-amino-acid chain: Glycerol-3-phosphate phosphatase (321 aa).

Catalysis depends on Asp-34, which acts as the Nucleophile. Asp-34, Asp-36, and Asp-260 together coordinate Mg(2+). Asp-36 functions as the Proton donor in the catalytic mechanism.

This sequence belongs to the HAD-like hydrolase superfamily. CbbY/CbbZ/Gph/YieH family. Homodimer. Mg(2+) serves as cofactor. Expression was confirmed in liver, adipose tissue, testis and pancreatic islet.

It carries out the reaction O-phospho-L-tyrosyl-[protein] + H2O = L-tyrosyl-[protein] + phosphate. The catalysed reaction is sn-glycerol 1-phosphate + H2O = glycerol + phosphate. It catalyses the reaction sn-glycerol 3-phosphate + H2O = glycerol + phosphate. In terms of biological role, glycerol-3-phosphate phosphatase hydrolyzing glycerol-3-phosphate into glycerol. Thereby, regulates the cellular levels of glycerol-3-phosphate a metabolic intermediate of glucose, lipid and energy metabolism. Was also shown to have a 2-phosphoglycolate phosphatase activity and a tyrosine-protein phosphatase activity. However, their physiological relevance is unclear. In vitro, also has a phosphatase activity toward ADP, ATP, GDP and GTP. The polypeptide is Glycerol-3-phosphate phosphatase (Rattus norvegicus (Rat)).